Reading from the N-terminus, the 324-residue chain is Phospho-N-acetylmuramoyl-pentapeptide-transferase (324 aa).

10 consecutive transmembrane segments (helical) span residues 5–25 (VMVL…PLFI), 50–70 (GTPT…TLLM), 77–97 (LSVE…LGFL), 117–137 (LIGQ…SGFS), 147–167 (LSIN…VGGS), 176–196 (LDGL…VLAW), 203–223 (IAIF…FNAH), 227–247 (VFMG…VAIL), 250–270 (LEIL…SVII), and 304–324 (VTFW…EVWI).

The protein belongs to the glycosyltransferase 4 family. MraY subfamily. Requires Mg(2+) as cofactor.

It is found in the cell membrane. The catalysed reaction is UDP-N-acetyl-alpha-D-muramoyl-L-alanyl-gamma-D-glutamyl-meso-2,6-diaminopimeloyl-D-alanyl-D-alanine + di-trans,octa-cis-undecaprenyl phosphate = di-trans,octa-cis-undecaprenyl diphospho-N-acetyl-alpha-D-muramoyl-L-alanyl-D-glutamyl-meso-2,6-diaminopimeloyl-D-alanyl-D-alanine + UMP. Its pathway is cell wall biogenesis; peptidoglycan biosynthesis. Its function is as follows. Catalyzes the initial step of the lipid cycle reactions in the biosynthesis of the cell wall peptidoglycan: transfers peptidoglycan precursor phospho-MurNAc-pentapeptide from UDP-MurNAc-pentapeptide onto the lipid carrier undecaprenyl phosphate, yielding undecaprenyl-pyrophosphoryl-MurNAc-pentapeptide, known as lipid I. The protein is Phospho-N-acetylmuramoyl-pentapeptide-transferase of Geobacillus sp. (strain WCH70).